We begin with the raw amino-acid sequence, 122 residues long: Small ribosomal subunit protein uS13 (122 aa).

The tract at residues 95–122 is disordered; it reads GLPVRGQRTHTNARTRKGPAKPIAGKKK.

Belongs to the universal ribosomal protein uS13 family. Part of the 30S ribosomal subunit. Forms a loose heterodimer with protein S19. Forms two bridges to the 50S subunit in the 70S ribosome.

Functionally, located at the top of the head of the 30S subunit, it contacts several helices of the 16S rRNA. In the 70S ribosome it contacts the 23S rRNA (bridge B1a) and protein L5 of the 50S subunit (bridge B1b), connecting the 2 subunits; these bridges are implicated in subunit movement. Contacts the tRNAs in the A and P-sites. This chain is Small ribosomal subunit protein uS13, found in Caulobacter vibrioides (strain ATCC 19089 / CIP 103742 / CB 15) (Caulobacter crescentus).